A 487-amino-acid polypeptide reads, in one-letter code: NADH-quinone oxidoreductase subunit N (487 aa).

A run of 13 helical transmembrane segments spans residues 9–29, 38–58, 73–93, 108–128, 161–181, 208–228, 240–260, 277–297, 306–326, 328–348, 374–394, 408–430, and 452–472; these read PVLP…LGVF, VSVL…SLGG, FAGF…AMSL, VLVL…DFIA, FVLG…LYGF, IIAG…AVPF, PTPV…CLLV, VVTF…VVQT, SSIG…TLGI, GVLI…AVIL, AFVM…AGFW, LYTL…LRIV, and LVMA…APLV.

It belongs to the complex I subunit 2 family. NDH-1 is composed of 14 different subunits. Subunits NuoA, H, J, K, L, M, N constitute the membrane sector of the complex.

Its subcellular location is the cell inner membrane. It catalyses the reaction a quinone + NADH + 5 H(+)(in) = a quinol + NAD(+) + 4 H(+)(out). In terms of biological role, NDH-1 shuttles electrons from NADH, via FMN and iron-sulfur (Fe-S) centers, to quinones in the respiratory chain. The immediate electron acceptor for the enzyme in this species is believed to be ubiquinone. Couples the redox reaction to proton translocation (for every two electrons transferred, four hydrogen ions are translocated across the cytoplasmic membrane), and thus conserves the redox energy in a proton gradient. The polypeptide is NADH-quinone oxidoreductase subunit N (Paramagnetospirillum magneticum (strain ATCC 700264 / AMB-1) (Magnetospirillum magneticum)).